A 420-amino-acid chain; its full sequence is MDAQAYLLQLGQAAKSSGFALANLGVMAKNRLLGRVAAELKSAFDEILAANAKDVAAARASGLGDAMVDRLLLNDDRLKGIIADIDNVISLADPIGEEFDSRLLDNGMRLCRRRVPLGVIGVIYEARPNVTVEIAVLALKTGNAVILRGGKETLESNLALAAAIRRALAGEGLPEDCVQLIDNPDRALVTGLLKLDKFVDMIVPRGGQGLQRLCAEQATIPVILGGIGICHLYLDRDADISRAANVIINAKVQRPTVCNALDTLLIHRDKLDWLPTLARALQQQGVKLVACEQSLGALAAAGIEAEAASDESFGTEWLSLTLGVKVVADIDEAIAHIRHYSSGHSEAILTDNLAAATHFMNEVNSAAVYLNASTRFTDGGQFGFGAEVAVSTQKLHARGPMGLEALTTYKWLGVGDYSCR.

The protein belongs to the gamma-glutamyl phosphate reductase family.

Its subcellular location is the cytoplasm. It carries out the reaction L-glutamate 5-semialdehyde + phosphate + NADP(+) = L-glutamyl 5-phosphate + NADPH + H(+). The protein operates within amino-acid biosynthesis; L-proline biosynthesis; L-glutamate 5-semialdehyde from L-glutamate: step 2/2. Functionally, catalyzes the NADPH-dependent reduction of L-glutamate 5-phosphate into L-glutamate 5-semialdehyde and phosphate. The product spontaneously undergoes cyclization to form 1-pyrroline-5-carboxylate. This chain is Gamma-glutamyl phosphate reductase, found in Shewanella amazonensis (strain ATCC BAA-1098 / SB2B).